We begin with the raw amino-acid sequence, 1306 residues long: Angiotensin-converting enzyme (1306 aa).

Positions 1-29 (MGAASGRRGPGLLLPLPLLLLLPPQPALA) are cleaved as a signal peptide. The Extracellular portion of the chain corresponds to 30 to 1256 (LDPGLQPGNF…GLDLDAQQAR (1227 aa)). 9 N-linked (GlcNAc...) asparagine glycosylation sites follow: asparagine 38, asparagine 54, asparagine 74, glutamate 103, asparagine 111, isoleucine 121, tyrosine 140, asparagine 146, and asparagine 160. Peptidase M2 domains are found at residues 40–624 (SADE…LGWP) and 643–1222 (VTDE…LGWP). A disulfide bridge connects residues cysteine 157 and cysteine 165. Tyrosine 231 serves as a coordination point for chloride. N-linked (GlcNAc...) asparagine glycans are attached at residues asparagine 318 and asparagine 368. A disulfide bridge connects residues cysteine 359 and cysteine 377. Histidine 390 is a Zn(2+) binding site. Catalysis depends on glutamate 391, which acts as the Proton acceptor 1. Positions 394, 414, 418, and 442 each coordinate Zn(2+). Asparagine 445 and asparagine 509 each carry an N-linked (GlcNAc...) asparagine glycan. Residue histidine 520 is the Proton donor 1 of the active site. Arginine 529 serves as a coordination point for chloride. A disulfide bridge connects residues cysteine 545 and cysteine 557. N-linked (GlcNAc...) asparagine glycosylation is found at asparagine 617 and asparagine 677. Asparagine 695 and asparagine 714 each carry an N-linked (GlcNAc...) (complex) asparagine glycan. Cysteines 757 and 763 form a disulfide. The N-linked (GlcNAc...) asparagine; partial glycan is linked to asparagine 760. The chloride site is built by arginine 791 and tyrosine 829. Asparagine 942 carries an N-linked (GlcNAc...) asparagine; partial glycan. Cysteine 957 and cysteine 975 are oxidised to a cystine. Residue histidine 988 participates in Zn(2+) binding. The active-site Proton acceptor 2 is glutamate 989. Positions 992 and 1016 each coordinate Zn(2+). Chloride contacts are provided by tryptophan 1090 and arginine 1094. Catalysis depends on histidine 1118, which acts as the Proton donor 2. Arginine 1127 contacts chloride. An intrachain disulfide couples cysteine 1143 to cysteine 1155. Asparagine 1191 carries N-linked (GlcNAc...) asparagine; partial glycosylation. Residues 1215–1256 (HGEKLGWPQYNWTPNSARSEGPLPDSGRVSFLGLDLDAQQAR) are juxtamembrane stalk. A helical transmembrane segment spans residues 1257-1277 (VGQWLLLFLGIALLVATLGLS). Residues 1278-1306 (QRLFSIRHRSLHRHSHGPQFGSEVELRHS) are Cytoplasmic-facing. Serine 1299 bears the Phosphoserine mark.

It belongs to the peptidase M2 family. In terms of assembly, monomer and homodimer; homodimerizes following binding to an inhibitor. Interacts with calmodulin (CALM1, CALM2 or CALM3); interaction takes place in the cytoplasmic region and regulates phosphorylation and proteolytic cleavage. It depends on Zn(2+) as a cofactor. The cofactor is chloride. In terms of processing, produced following proteolytic cleavage by secretase enzymes that cleave the transmembrane form in the juxtamembrane stalk region upstream of the transmembrane region. Cleavage can take place at different sites of the juxtamembrane stalk region. Post-translationally, phosphorylated by CK2 on Ser-1299; which allows membrane retention. Phosphorylated on tyrosine residues on its extracellular part, promoting cleavage by secretase enzymes and formation of the soluble form (Angiotensin-converting enzyme, soluble form). As to expression, ubiquitously expressed, with highest levels in lung, kidney, heart, gastrointestinal system and prostate. In terms of tissue distribution, specifically expressed in spermatocytes and adult testis.

It localises to the cell membrane. It is found in the cytoplasm. The protein localises to the secreted. It carries out the reaction Release of a C-terminal dipeptide, oligopeptide-|-Xaa-Yaa, when Xaa is not Pro, and Yaa is neither Asp nor Glu. Thus, conversion of angiotensin I to angiotensin II, with increase in vasoconstrictor activity, but no action on angiotensin II.. The enzyme catalyses angiotensin I + H2O = L-histidyl-L-leucine + angiotensin II. The catalysed reaction is bradykinin + H2O = L-Phe-L-Arg + bradykinin(1-7). It catalyses the reaction substance P + H2O = substance P(1-9) + L-Leu-L-Met-NH2. It carries out the reaction substance P + H2O = substance P(1-8) + Gly-L-Leu-L-Met-NH2. The enzyme catalyses substance P + H2O = L-Phe-L-Phe-Gly-L-Leu-L-Met-NH2 + substance P(1-6). The catalysed reaction is neurotensin + H2O = neurotensin(1-11) + L-isoleucyl-L-leucine. It catalyses the reaction goralatide + H2O = N-acetyl-L-seryl-L-aspartate + L-lysyl-L-proline. It carries out the reaction Met-enkephalin + H2O = L-phenylalanyl-L-methionine + L-tyrosylglycylglycine. The enzyme catalyses Leu-enkephalin + H2O = L-tyrosylglycylglycine + L-phenylalanyl-L-leucine. The catalysed reaction is Met-enkephalin-Arg-Phe + H2O = L-arginyl-L-phenylalanine + Met-enkephalin. The dipeptidyl carboxypeptidase activity is strongly activated by chloride. The dipeptidyl carboxypeptidase activity is specifically inhibited by lisinopril, captopril and enalaprilat. Its activity is regulated as follows. Strongly inhibited by lisinopril and captopril. Dipeptidyl carboxypeptidase that removes dipeptides from the C-terminus of a variety of circulating hormones, such as angiotensin I, bradykinin or enkephalins, thereby playing a key role in the regulation of blood pressure, electrolyte homeostasis or synaptic plasticity. Composed of two similar catalytic domains, each possessing a functional active site, with different selectivity for substrates. Plays a major role in the angiotensin-renin system that regulates blood pressure and sodium retention by the kidney by converting angiotensin I to angiotensin II, resulting in an increase of the vasoconstrictor activity of angiotensin. Also able to inactivate bradykinin, a potent vasodilator, and therefore enhance the blood pressure response. Acts as a regulator of synaptic transmission by mediating cleavage of neuropeptide hormones, such as substance P, neurotensin or enkephalins. Catalyzes degradation of different enkephalin neuropeptides (Met-enkephalin, Leu-enkephalin, Met-enkephalin-Arg-Phe and possibly Met-enkephalin-Arg-Gly-Leu). Acts as a regulator of synaptic plasticity in the nucleus accumbens of the brain by mediating cleavage of Met-enkephalin-Arg-Phe, a strong ligand of Mu-type opioid receptor OPRM1, into Met-enkephalin. Met-enkephalin-Arg-Phe cleavage by ACE decreases activation of OPRM1, leading to long-term synaptic potentiation of glutamate release. Also acts as a regulator of hematopoietic stem cell differentiation by mediating degradation of hemoregulatory peptide N-acetyl-SDKP (AcSDKP). Acts as a regulator of cannabinoid signaling pathway by mediating degradation of hemopressin, an antagonist peptide of the cannabinoid receptor CNR1. Involved in amyloid-beta metabolism by catalyzing degradation of Amyloid-beta protein 40 and Amyloid-beta protein 42 peptides, thereby preventing plaque formation. Catalyzes cleavage of cholecystokinin (maturation of Cholecystokinin-8 and Cholecystokinin-5) and Gonadoliberin-1 (both maturation and degradation) hormones. Degradation of hemoregulatory peptide N-acetyl-SDKP (AcSDKP) and amyloid-beta proteins is mediated by the N-terminal catalytic domain, while angiotensin I and cholecystokinin cleavage is mediated by the C-terminal catalytic region. In terms of biological role, soluble form that is released in blood plasma and other body fluids following proteolytic cleavage in the juxtamembrane stalk region. Its function is as follows. Isoform produced by alternative promoter usage that is specifically expressed in spermatocytes and adult testis, and which is required for male fertility. In contrast to somatic isoforms, only contains one catalytic domain. Acts as a dipeptidyl carboxypeptidase that removes dipeptides from the C-terminus of substrates. The identity of substrates that are needed for male fertility is unknown. May also have a glycosidase activity which releases GPI-anchored proteins from the membrane by cleaving the mannose linkage in the GPI moiety. The GPIase activity was reported to be essential for the egg-binding ability of the sperm. This activity is however unclear and has been challenged by other groups, suggesting that it may be indirect. This chain is Angiotensin-converting enzyme, found in Homo sapiens (Human).